Here is a 180-residue protein sequence, read N- to C-terminus: Transcriptional repressor NrdR (180 aa).

A zinc finger spans residues 3 to 34 (CPYCQNTSSRVLESRSTEAGQSIRRRRECLQC). Residues 49-139 (ISVLKKDKSK…VYGEFKGITD (91 aa)) form the ATP-cone domain. The segment at 148-180 (QQEERESSSSPEWSDAGEEATVIEDSSQVMASS) is disordered. The segment covering 171-180 (EDSSQVMASS) has biased composition (polar residues).

This sequence belongs to the NrdR family. It depends on Zn(2+) as a cofactor.

Negatively regulates transcription of bacterial ribonucleotide reductase nrd genes and operons by binding to NrdR-boxes. The sequence is that of Transcriptional repressor NrdR from Gloeothece citriformis (strain PCC 7424) (Cyanothece sp. (strain PCC 7424)).